The following is a 72-amino-acid chain: MKASKIREMTTQELHNELKKLKRELFNLRFQLATNQLENPMRIREVKRTIARIKTIMRERELEQERANKNVK.

It belongs to the universal ribosomal protein uL29 family.

The protein is Large ribosomal subunit protein uL29 of Caldicellulosiruptor bescii (strain ATCC BAA-1888 / DSM 6725 / KCTC 15123 / Z-1320) (Anaerocellum thermophilum).